The chain runs to 137 residues: Envelope glycoprotein L (137 aa).

Residues 1 to 25 form the signal peptide; that stretch reads MRTVGVFLATCLVTIFVLPTWGNWA. Positions 23–128 are interaction with gH; the sequence is NWAYPCCHVT…SVEDLFGANL (106 aa). Intrachain disulfides connect C28–C56 and C29–C79.

The protein belongs to the herpesviridae glycoprotein L family. Interacts with glycoprotein H (gH); this interaction is necessary for the correct processing and cell surface expression of gH. The heterodimer gH/gL seems to interact with gB trimers during fusion. The heterodimer gH/gL interacts with host EPHA2 to facilitate virus internalization and fusion.

The protein resides in the virion membrane. The protein localises to the host cell membrane. Its subcellular location is the host Golgi apparatus. It localises to the host trans-Golgi network. In terms of biological role, the heterodimer glycoprotein H-glycoprotein L is required for the fusion of viral and plasma membranes leading to virus entry into the host cell. Acts as a functional inhibitor of gH and maintains gH in an inhibited form. Upon binding to host integrins, gL dissociates from gH leading to activation of the viral fusion glycoproteins gB and gH. The heterodimer gH/gL targets also host EPHA2 to promote viral entry. This is Envelope glycoprotein L from Epstein-Barr virus (strain AG876) (HHV-4).